The primary structure comprises 118 residues: Holin-like protein CidA 2 (118 aa).

Helical transmembrane passes span 5 to 27 (MLLL…QGVF), 31 to 50 (MPGS…TRIL), 62 to 84 (LLVF…ESFL), and 88 to 110 (GSII…GYIS).

Belongs to the CidA/LrgA family. CidA subfamily.

The protein localises to the cell membrane. In terms of biological role, increases the activity of extracellular murein hydrolases possibly by mediating their export via hole formation. Inhibited by the antiholin-like proteins LrgAB. In an unstressed cell, the LrgAB products probably inhibit the function of the CidA protein. When a cell is stressed by the addition of antibiotics or by other factors in the environment, CidA possibly oligomerizes within the bacterial cell membrane, creating lesions that disrupt the proton motive force, which in turn results in loss of cell viability. These lesions are also hypothesized to regulate the subsequent cell lysis by either allowing the murein hydrolases access to the cell wall substrate and/or regulating their activity by a possible change in the cell wall pH that results from loss of membrane potential. The polypeptide is Holin-like protein CidA 2 (cidA2) (Bacillus anthracis).